Here is a 55-residue protein sequence, read N- to C-terminus: Large ribosomal subunit protein bL33 (55 aa).

This sequence belongs to the bacterial ribosomal protein bL33 family.

This is Large ribosomal subunit protein bL33 from Wigglesworthia glossinidia brevipalpis.